The following is a 523-amino-acid chain: Bifunctional purine biosynthesis protein PurH (523 aa).

Residues 1–149 (MSDPVIKRAL…KNNESVTVIT (149 aa)) enclose the MGS-like domain.

The protein belongs to the PurH family.

It carries out the reaction (6R)-10-formyltetrahydrofolate + 5-amino-1-(5-phospho-beta-D-ribosyl)imidazole-4-carboxamide = 5-formamido-1-(5-phospho-D-ribosyl)imidazole-4-carboxamide + (6S)-5,6,7,8-tetrahydrofolate. The catalysed reaction is IMP + H2O = 5-formamido-1-(5-phospho-D-ribosyl)imidazole-4-carboxamide. The protein operates within purine metabolism; IMP biosynthesis via de novo pathway; 5-formamido-1-(5-phospho-D-ribosyl)imidazole-4-carboxamide from 5-amino-1-(5-phospho-D-ribosyl)imidazole-4-carboxamide (10-formyl THF route): step 1/1. It functions in the pathway purine metabolism; IMP biosynthesis via de novo pathway; IMP from 5-formamido-1-(5-phospho-D-ribosyl)imidazole-4-carboxamide: step 1/1. This is Bifunctional purine biosynthesis protein PurH from Chlorobaculum parvum (strain DSM 263 / NCIMB 8327) (Chlorobium vibrioforme subsp. thiosulfatophilum).